Consider the following 283-residue polypeptide: uncharacterized protein (283 aa).

Residue glycine 2 is the site of N-myristoyl glycine; by host attachment. N-linked (GlcNAc...) asparagine; by host glycosylation is found at asparagine 31, asparagine 95, asparagine 105, asparagine 108, asparagine 137, and asparagine 147. 2 helical membrane passes run 181 to 201 and 250 to 270; these read IIAA…VVYF and FIVL…LDIP. N-linked (GlcNAc...) asparagine; by host glycosylation is present at asparagine 277.

The protein localises to the membrane. This is an uncharacterized protein from Acanthamoeba polyphaga (Amoeba).